The chain runs to 311 residues: Probable manganese-dependent inorganic pyrophosphatase (311 aa).

Residues histidine 9, aspartate 13, aspartate 15, aspartate 77, histidine 99, and aspartate 151 each contribute to the Mn(2+) site.

The protein belongs to the PPase class C family. Mn(2+) is required as a cofactor.

It localises to the cytoplasm. It catalyses the reaction diphosphate + H2O = 2 phosphate + H(+). This chain is Probable manganese-dependent inorganic pyrophosphatase, found in Streptococcus suis (strain 98HAH33).